We begin with the raw amino-acid sequence, 316 residues long: Adenine deaminase (316 aa).

Zn(2+) contacts are provided by His14, His16, and His194. Glu197 acts as the Proton donor in catalysis. Asp275 is a binding site for Zn(2+). Asp276 contributes to the substrate binding site.

Belongs to the metallo-dependent hydrolases superfamily. Adenosine and AMP deaminases family. Adenine deaminase type 2 subfamily. Zn(2+) is required as a cofactor.

The enzyme catalyses adenine + H2O + H(+) = hypoxanthine + NH4(+). Functionally, catalyzes the hydrolytic deamination of adenine to hypoxanthine. Plays an important role in the purine salvage pathway and in nitrogen catabolism. In Pseudomonas aeruginosa (strain LESB58), this protein is Adenine deaminase.